The sequence spans 68 residues: Cytochrome c3 (68 aa).

Heme is bound by residues His-17, His-20, Cys-26, Cys-29, His-30, His-45, Cys-49, Cys-52, His-53, Cys-62, Cys-65, and His-66.

In terms of processing, binds 3 heme groups per subunit.

Functionally, participates in sulfate respiration coupled with phosphorylation by transferring electrons from the enzyme dehydrogenase to ferredoxin. The sequence is that of Cytochrome c3 (cyd) from Desulfuromonas acetoxidans (Chloropseudomonas ethylica).